A 332-amino-acid chain; its full sequence is MNSTHHHGMYTSLHLWNRSSHGLHGNASESLGKGHSDGGCYEQLFVSPEVFVTLGVISLLENILVIVAIAKNKNLHSPMYFFICSLAVADMLVSVSNGSETIVITLLNSTDTDAQSFTVNIDNVIDSVICSSLLASICSLLSIAVDRYFTIFYALQYHNIMTVRRVGIIISCIWAACTVSGVLFIIYSDSSAVIICLITMFFTMLVLMASLYVHMFLMARLHIKRIAVLPGTGTIRQGANMKGAITLTILIGVFVVCWAPFFLHLLFYISCPQNPYCVCFMSHFNLYLILIMCNAVIDPLIYALRSQELRKTFKEIICFYPLGGICELPGRY.

Residues 1-43 lie on the Extracellular side of the membrane; sequence MNSTHHHGMYTSLHLWNRSSHGLHGNASESLGKGHSDGGCYEQ. 3 N-linked (GlcNAc...) asparagine glycosylation sites follow: Asn2, Asn17, and Asn26. Disulfide bonds link Cys40–Cys279 and Cys271–Cys277. The chain crosses the membrane as a helical span at residues 44 to 69; sequence LFVSPEVFVTLGVISLLENILVIVAI. Topologically, residues 70–81 are cytoplasmic; that stretch reads AKNKNLHSPMYF. The helical transmembrane segment at 82 to 106 threads the bilayer; that stretch reads FICSLAVADMLVSVSNGSETIVITL. Ca(2+) contacts are provided by Glu100, Asp122, and Asp126. Residues 107 to 123 are Extracellular-facing; sequence LNSTDTDAQSFTVNIDN. Residues 124–145 form a helical membrane-spanning segment; that stretch reads VIDSVICSSLLASICSLLSIAV. The Cytoplasmic portion of the chain corresponds to 146 to 165; that stretch reads DRYFTIFYALQYHNIMTVRR. A helical transmembrane segment spans residues 166–186; the sequence is VGIIISCIWAACTVSGVLFII. The Extracellular segment spans residues 187 to 191; that stretch reads YSDSS. The chain crosses the membrane as a helical span at residues 192–215; sequence AVIICLITMFFTMLVLMASLYVHM. The Cytoplasmic segment spans residues 216–248; it reads FLMARLHIKRIAVLPGTGTIRQGANMKGAITLT. A helical membrane pass occupies residues 249–271; it reads ILIGVFVVCWAPFFLHLLFYISC. The Extracellular portion of the chain corresponds to 272 to 280; that stretch reads PQNPYCVCF. A helical membrane pass occupies residues 281-304; it reads MSHFNLYLILIMCNAVIDPLIYAL. Residues 305–332 lie on the Cytoplasmic side of the membrane; it reads RSQELRKTFKEIICFYPLGGICELPGRY. Cys318 carries the S-palmitoyl cysteine lipid modification.

Belongs to the G-protein coupled receptor 1 family. In terms of assembly, homodimer; disulfide-linked, also forms higher order oligomers. Interacts with GNAS. Interacts with ATRNL1. Interacts with MGRN1; this interaction competes with GNAS-binding and thus inhibits agonist-induced cAMP production. Interacts with MRAP and MRAP2; these associated factors increase ligand-sensitivity and generation of cAMP. Brain, enriched in the striatum, nucleus accumbens, and periaqueductal gray.

The protein localises to the cell membrane. In terms of biological role, hormone receptor that acts as a key component of the leptin-melanocortin pathway at the intersection of homeostatic maintenance of energetic state. Plays a role in regulating food intake: activation by a stimulating hormone such as anorexigenic alpha-melanocyte stimulating hormone (alpha-MSH) inhibits appetite, whereas binding to a natural antagonist like Agouti-related protein/AGRP promotes appetite. G-protein-coupled receptor that activates conventional Galphas signaling leading to induction of anorexogenic signaling in the hypothalamus to result in negative energy balance. Regulates the firing activity of neurons from the hypothalamus by alpha-MSH and AGRP independently of Galphas signaling by ligand-induced coupling of closure of inwardly rectifying potassium channel KCNJ13. In intestinal epithelial cells, plays a role in the inhibition of hepatic glucose production via nesfatin-1/NUCB2 leading to increased cyclic adenosine monophosphate (cAMP) levels and glucagon-like peptide 1 (GLP-1) secretion in the intestinal epithelium. The sequence is that of Melanocortin receptor 4 (Mc4r) from Rattus norvegicus (Rat).